Reading from the N-terminus, the 355-residue chain is Elongation factor Ts, mitochondrial (355 aa).

Residues 1 to 46 constitute a mitochondrion transit peptide; it reads MIRSLNFALRNCNKNILINSNKITINNGLLLKKNNFCTQSTSEVKV.

Belongs to the EF-Ts family.

It localises to the mitochondrion. Associates with the EF-Tu.GDP complex and induces the exchange of GDP to GTP. It remains bound to the aminoacyl-tRNA.EF-Tu.GTP complex up to the GTP hydrolysis stage on the ribosome. This is Elongation factor Ts, mitochondrial (tsfm) from Dictyostelium discoideum (Social amoeba).